Reading from the N-terminus, the 169-residue chain is GTP-dependent dephospho-CoA kinase (169 aa).

Aspartate 45, aspartate 64, and glutamate 121 together coordinate GTP.

This sequence belongs to the GTP-dependent DPCK family.

It carries out the reaction 3'-dephospho-CoA + GTP = GDP + CoA + H(+). The protein operates within cofactor biosynthesis; coenzyme A biosynthesis. Functionally, catalyzes the GTP-dependent phosphorylation of the 3'-hydroxyl group of dephosphocoenzyme A to form coenzyme A (CoA). This is GTP-dependent dephospho-CoA kinase from Methanobrevibacter smithii (strain ATCC 35061 / DSM 861 / OCM 144 / PS).